We begin with the raw amino-acid sequence, 159 residues long: Putative ribosomal RNA large subunit methyltransferase H (159 aa).

S-adenosyl-L-methionine-binding positions include L76, G108, and 127–132; that span reads FSKMTF.

This sequence belongs to the RNA methyltransferase RlmH family.

It is found in the cytoplasm. The enzyme catalyses pseudouridine(1915) in 23S rRNA + S-adenosyl-L-methionine = N(3)-methylpseudouridine(1915) in 23S rRNA + S-adenosyl-L-homocysteine + H(+). Functionally, specifically methylates the pseudouridine at position 1915 (m3Psi1915) in 23S rRNA. The protein is Putative ribosomal RNA large subunit methyltransferase H of Methanococcus maripaludis (strain C7 / ATCC BAA-1331).